Consider the following 450-residue polypeptide: Salicylate synthase (450 aa).

The Proton donor role is filled by Glu252. Residue 270 to 271 (GT) coordinates substrate. Glu297 serves as a coordination point for Mg(2+). Residues Tyr385, Arg405, and 419 to 421 (GAG) contribute to the substrate site. Mg(2+)-binding residues include Glu431 and Glu434. Lys438 provides a ligand contact to substrate.

The protein belongs to the anthranilate synthase component I family. Salicylate synthase subfamily. As to quaternary structure, monomer. It depends on Mg(2+) as a cofactor.

It catalyses the reaction chorismate = isochorismate. It carries out the reaction isochorismate = salicylate + pyruvate. The catalysed reaction is chorismate = prephenate. The protein operates within siderophore biosynthesis; mycobactin biosynthesis. In terms of biological role, involved in the incorporation of salicylate into the virulence-conferring salicylate-based siderophore mycobactin. Catalyzes the initial conversion of chorismate to yield the intermediate isochorismate (isochorismate synthase activity), and the subsequent elimination of the enolpyruvyl side chain in a lyase reaction to give salicylate (isochorismate pyruvate-lyase activity). In the absence of magnesium, MbtI displays a chorismate mutase activity and converts chorismate to prephenate. The sequence is that of Salicylate synthase (mbtI) from Mycobacterium bovis (strain ATCC BAA-935 / AF2122/97).